Consider the following 288-residue polypeptide: ATP synthase gamma chain (288 aa).

Belongs to the ATPase gamma chain family. In terms of assembly, F-type ATPases have 2 components, CF(1) - the catalytic core - and CF(0) - the membrane proton channel. CF(1) has five subunits: alpha(3), beta(3), gamma(1), delta(1), epsilon(1). CF(0) has three main subunits: a, b and c.

It is found in the cell inner membrane. Its function is as follows. Produces ATP from ADP in the presence of a proton gradient across the membrane. The gamma chain is believed to be important in regulating ATPase activity and the flow of protons through the CF(0) complex. This is ATP synthase gamma chain from Rickettsia typhi (strain ATCC VR-144 / Wilmington).